A 301-amino-acid polypeptide reads, in one-letter code: Mitochondrial substrate carrier family protein Z (301 aa).

At 1–19 the chain is on the mitochondrial intermembrane side; the sequence is MTGKEENKQQQHVNFPWKR. 3 Solcar repeats span residues 14-101, 116-200, and 210-293; these read NFPW…FTEQ, QQFG…ISDY, and LPVW…VMGI. The helical transmembrane segment at 20 to 37 threads the bilayer; it reads LVAGAVAGTADVWACHPL. Residues 38–65 are Mitochondrial matrix-facing; that stretch reads DRIKTQLQNNPGKSIVGTFGDIVSKGKG. The helical transmembrane segment at 66 to 86 threads the bilayer; it reads FTGGVNALYEGILPMTAEAIF. At 87-117 the chain is on the mitochondrial intermembrane side; the sequence is KVGIRYFAFSWFTEQYKTTVYKGETLNKKQQ. Residues 118-138 traverse the membrane as a helical segment; the sequence is FGANLLGGAFAGTIESFVVVI. The Mitochondrial matrix portion of the chain corresponds to 139–174; that stretch reads PCELLKVRHMTQEHNKSFGTVFRDVLREEGFQGLYK. A helical membrane pass occupies residues 175 to 191; that stretch reads GGSATLLRQITNHMIRF. Residues 192–212 lie on the Mitochondrial intermembrane side of the membrane; sequence PTFYAISDYLKGGDHSVHLPV. A helical transmembrane segment spans residues 213 to 229; that stretch reads WQNLSAGAIAGTASTLF. Residues 230 to 275 are Mitochondrial matrix-facing; that stretch reads NNPLDTIKTRMQKQGQNQTTMQVVRGIYQETGVKGYWAGVIPRILR. A helical transmembrane segment spans residues 276 to 296; sequence VAPGQAITWAVVELVMGILEP. Topologically, residues 297–301 are mitochondrial intermembrane; sequence SSKKH.

This sequence belongs to the mitochondrial carrier (TC 2.A.29) family.

It localises to the mitochondrion inner membrane. In terms of biological role, mitochondrial solute carriers shuttle metabolites, nucleotides, and cofactors through the mitochondrial inner membrane. This is Mitochondrial substrate carrier family protein Z (mcfZ) from Dictyostelium discoideum (Social amoeba).